The following is a 257-amino-acid chain: Probable enoyl-CoA hydratase echA8 (257 aa).

Belongs to the enoyl-CoA hydratase/isomerase family.

The enzyme catalyses a (3S)-3-hydroxyacyl-CoA = a (2E)-enoyl-CoA + H2O. It carries out the reaction a 4-saturated-(3S)-3-hydroxyacyl-CoA = a (3E)-enoyl-CoA + H2O. In terms of biological role, could possibly oxidize fatty acids using specific components. The sequence is that of Probable enoyl-CoA hydratase echA8 (echA8) from Mycobacterium tuberculosis (strain CDC 1551 / Oshkosh).